A 49-amino-acid polypeptide reads, in one-letter code: MRVQVTLACTETGDRNYITTKNKRTNPERIELKKYSPRLKRHTLHRETK.

This sequence belongs to the bacterial ribosomal protein bL33 family.

The sequence is that of Large ribosomal subunit protein bL33B from Shouchella clausii (strain KSM-K16) (Alkalihalobacillus clausii).